A 147-amino-acid polypeptide reads, in one-letter code: 3-dehydroquinate dehydratase (147 aa).

Residue tyrosine 23 is the Proton acceptor of the active site. 3 residues coordinate substrate: asparagine 74, histidine 80, and aspartate 87. Histidine 100 (proton donor) is an active-site residue. Substrate contacts are provided by residues 101 to 102 (IS) and arginine 111.

This sequence belongs to the type-II 3-dehydroquinase family. As to quaternary structure, homododecamer.

It carries out the reaction 3-dehydroquinate = 3-dehydroshikimate + H2O. It functions in the pathway metabolic intermediate biosynthesis; chorismate biosynthesis; chorismate from D-erythrose 4-phosphate and phosphoenolpyruvate: step 3/7. Its function is as follows. Catalyzes a trans-dehydration via an enolate intermediate. The chain is 3-dehydroquinate dehydratase from Bacillus pumilus (strain SAFR-032).